The primary structure comprises 50 residues: MKAIMVLFYVMMLTIIASVSMVNGSPGKDDYVNPKEQLGYDILEKLRQKP.

Residues 1–26 form the signal peptide; the sequence is MKAIMVLFYVMMLTIIASVSMVNGSP.

As to quaternary structure, monomer. In terms of tissue distribution, expressed in venom sac and, to a lesser extent, in venom gland. Not expressed in brain.

Its subcellular location is the secreted. In terms of biological role, amphipathic peptide which probably adopts an alpha-helical structure. When injected in subesophageal ganglia of cockroach P.americana, a natural host for larvae of A.compressa, dampens the escape response for about 1 hour which may contribute to early stages of hypokinesia. Has no antimicrobial activity against E.coli DH5alpha or B.thuringiensis. Is not cytotoxic in vitro. This Ampulex compressa (Emerald cockroach wasp) protein is Ampulexin 1.